Consider the following 186-residue polypeptide: Heat shock protein 23 (186 aa).

Positions 53–161 (VGASSGSSGA…KGNERIVQIQ (109 aa)) constitute a sHSP domain. A disordered region spans residues 163–186 (VGPAHLNVKENPKEAVEQDNGNDK). Over residues 169–186 (NVKENPKEAVEQDNGNDK) the composition is skewed to basic and acidic residues.

It belongs to the small heat shock protein (HSP20) family.

The chain is Heat shock protein 23 (Hsp23) from Drosophila melanogaster (Fruit fly).